A 367-amino-acid polypeptide reads, in one-letter code: Glycolate oxidase 3 (367 aa).

Positions 1–360 (MELITNVSEY…TRNHVITDSD (360 aa)) constitute an FMN hydroxy acid dehydrogenase domain. Tyr25 serves as a coordination point for glyoxylate. Residues 78–80 (PSA), Ser107, 128–130 (QLY), and Thr156 each bind FMN. Tyr130 is a glyoxylate binding site. Arg165 contributes to the glyoxylate binding site. FMN is bound by residues Lys231 and Ser253. Positions 255 and 258 each coordinate glyoxylate. His255 serves as the catalytic Proton acceptor. FMN contacts are provided by residues 286 to 290 (DGGVR) and 309 to 310 (GR). A Microbody targeting signal motif is present at residues 365–367 (SRL).

This sequence belongs to the FMN-dependent alpha-hydroxy acid dehydrogenase family. Homotetramer. FMN is required as a cofactor.

It localises to the peroxisome. It carries out the reaction glycolate + O2 = glyoxylate + H2O2. It participates in photosynthesis; photorespiration; glycine from 2-phosphoglycolate: step 2/3. Its function is as follows. Catalyzes the oxidation of glycolate to glyoxylate, with a reduction of O2 to H2O2. Is a key enzyme in photorespiration in green plants. The chain is Glycolate oxidase 3 (GLO3) from Oryza sativa subsp. indica (Rice).